The sequence spans 108 residues: UPF0102 protein Sputcn32_3693 (108 aa).

It belongs to the UPF0102 family.

The polypeptide is UPF0102 protein Sputcn32_3693 (Shewanella putrefaciens (strain CN-32 / ATCC BAA-453)).